The chain runs to 632 residues: Phosphomethylpyrimidine synthase (632 aa).

Residues N237, M266, Y295, H331, 351–353, 392–395, and E431 contribute to the substrate site; these read SRG and DGLR. H435 contributes to the Zn(2+) binding site. Residue Y458 coordinates substrate. H499 contacts Zn(2+). [4Fe-4S] cluster is bound by residues C579, C582, and C587.

The protein belongs to the ThiC family. As to quaternary structure, homodimer. It depends on [4Fe-4S] cluster as a cofactor.

The catalysed reaction is 5-amino-1-(5-phospho-beta-D-ribosyl)imidazole + S-adenosyl-L-methionine = 4-amino-2-methyl-5-(phosphooxymethyl)pyrimidine + CO + 5'-deoxyadenosine + formate + L-methionine + 3 H(+). It functions in the pathway cofactor biosynthesis; thiamine diphosphate biosynthesis. Its function is as follows. Catalyzes the synthesis of the hydroxymethylpyrimidine phosphate (HMP-P) moiety of thiamine from aminoimidazole ribotide (AIR) in a radical S-adenosyl-L-methionine (SAM)-dependent reaction. This chain is Phosphomethylpyrimidine synthase, found in Chromobacterium violaceum (strain ATCC 12472 / DSM 30191 / JCM 1249 / CCUG 213 / NBRC 12614 / NCIMB 9131 / NCTC 9757 / MK).